A 402-amino-acid chain; its full sequence is Omega-3 fatty acid desaturase fat-1 (402 aa).

Helical transmembrane passes span 79-99 (LVQDFAALTILYFALPAFEYF), 101-121 (LFGYLVWNIFMGVFGFALFVV), 235-255 (CVISGICCCVCAYIALTIAGS), and 260-280 (FWYYWVPLSFFGLMLVIVTYL).

The protein belongs to the fatty acid desaturase type 1 family.

It localises to the membrane. It catalyses the reaction (9Z,12Z)-octadecadienoyl-CoA + 2 Fe(II)-[cytochrome b5] + O2 + 2 H(+) = (9Z,12Z,15Z)-octadecatrienoyl-CoA + 2 Fe(III)-[cytochrome b5] + 2 H2O. It carries out the reaction (8Z,11Z,14Z)-eicosatrienoyl-CoA + 2 Fe(II)-[cytochrome b5] + O2 + 2 H(+) = (8Z,11Z,14Z,17Z)-eicosatetraenoyl-CoA + 2 Fe(III)-[cytochrome b5] + 2 H2O. The catalysed reaction is (5Z,8Z,11Z,14Z)-eicosatetraenoyl-CoA + 2 Fe(II)-[cytochrome b5] + O2 + 2 H(+) = (5Z,8Z,11Z,14Z,17Z)-eicosapentaenoyl-CoA + 2 Fe(III)-[cytochrome b5] + 2 H2O. The enzyme catalyses (7Z,10Z,13Z,16Z)-docosatetraenoyl-CoA + 2 Fe(II)-[cytochrome b5] + O2 + 2 H(+) = (7Z,10Z,13Z,16Z,19Z)-docosapentaenoyl-CoA + 2 Fe(III)-[cytochrome b5] + 2 H2O. It catalyses the reaction (6Z,9Z,12Z)-octadecatrienoyl-CoA + 2 Fe(II)-[cytochrome b5] + O2 + 2 H(+) = (6Z,9Z,12Z,15Z)-octadecatetraenoyl-CoA + 2 Fe(III)-[cytochrome b5] + 2 H2O. It participates in lipid metabolism; polyunsaturated fatty acid biosynthesis. Omega-3 fatty acid desaturase that recognizes a range of 18- and 20-carbon omega-6 substrates. Introduces a double bond in the fatty acid chain three carbons away from terminal methyl group to biosynthesize n-3 (omega-3) polyunsaturated fatty acids (PUFAs) endogenously (PUFAs are essential for membrane structure and many cellular and physiological processes). Acts on a number of substrates like linoleoyl-CoA ((9Z,12Z)-octadecadienoyl-CoA, 18:2n-6), dihomo-gamma-linolenoyl-CoA ((8Z,11Z,14Z)-eicosatrienoyl-CoA, 20:3n-6), and arachidonoyl-CoA ((5Z,8Z,11Z,14Z)-eicosatetraenoyl-CoA, 20:4n-6), to generate alpha-linolenoyl-CoA ((9Z,12Z,15Z)-octadecatrienoyl-CoA, 18:3n-3), (8Z,11Z,14Z,17Z)-eicosatetraenoyl-CoA (20:4n-3) and (5Z,8Z,11Z,14Z,17Z)-eicosapentaenoyl-CoA (20:5n-3) respectively. Unlike plants, Caenorhabditis elegans desaturases seem to use fatty acyl-CoAs as substrates. In Caenorhabditis elegans, this protein is Omega-3 fatty acid desaturase fat-1 (fat-1).